The sequence spans 229 residues: PKHD-type hydroxylase Rpal_3968 (229 aa).

The Fe2OG dioxygenase domain maps to 78 to 180 (QIFPPLFNRY…RVASFFWLQS (103 aa)). 3 residues coordinate Fe cation: H98, D100, and H161. R171 contributes to the 2-oxoglutarate binding site.

Requires Fe(2+) as cofactor. It depends on L-ascorbate as a cofactor.

The polypeptide is PKHD-type hydroxylase Rpal_3968 (Rhodopseudomonas palustris (strain TIE-1)).